We begin with the raw amino-acid sequence, 598 residues long: mRNA-capping enzyme (598 aa).

Positions 1–215 (MSQTGAPPRW…GSASAPASEP (215 aa)) are TPase. One can recognise a Tyrosine-protein phosphatase domain in the interval 25 to 183 (LPMKTMLGPR…FRRYGDVEDA (159 aa)). The active-site Phosphocysteine intermediate is cysteine 126. The segment at 186–227 (APPLPEWCFDEDEEEDGEEDGSASAPASEPSSSHTGQSKKKK) is disordered. Over residues 193–206 (CFDEDEEEDGEEDG) the composition is skewed to acidic residues. Positions 207–218 (SASAPASEPSSS) are enriched in low complexity. Residues 233–598 (GAVFLEGVSV…PKRSANSIPQ (366 aa)) form a GTase region. The N6-GMP-lysine intermediate role is filled by lysine 298. GTP-binding positions include arginine 303, arginine 319, 347–349 (DGE), 462–464 (KWK), and 532–537 (RQRVDK). Positions 575–598 (RKNPADSDLMPPPPPKRSANSIPQ) are disordered.

The protein in the N-terminal section; belongs to the non-receptor class of the protein-tyrosine phosphatase family. In the C-terminal section; belongs to the eukaryotic GTase family.

It localises to the nucleus. The catalysed reaction is a 5'-end triphospho-ribonucleoside in mRNA + H2O = a 5'-end diphospho-ribonucleoside in mRNA + phosphate + H(+). The enzyme catalyses a 5'-end diphospho-ribonucleoside in mRNA + GTP + H(+) = a 5'-end (5'-triphosphoguanosine)-ribonucleoside in mRNA + diphosphate. In terms of biological role, bifunctional mRNA-capping enzyme exhibiting RNA 5'-triphosphate monophosphatase activity in the N-terminal part and mRNA guanylyltransferase activity in the C-terminal part. Catalyzes the first two steps of cap formation: by removing the gamma-phosphate from the 5'-triphosphate end of nascent mRNA to yield a diphosphate end, and by transferring the GMP moiety of GTP to the 5'-diphosphate terminus of RNA via a covalent enzyme-GMP reaction intermediate. This Danio rerio (Zebrafish) protein is mRNA-capping enzyme (rngtt).